Here is a 309-residue protein sequence, read N- to C-terminus: Homoserine O-succinyltransferase (309 aa).

The active-site Acyl-thioester intermediate is the Cys142. Positions 163 and 192 each coordinate substrate. His235 (proton acceptor) is an active-site residue. Glu237 is an active-site residue. Arg249 contributes to the substrate binding site.

The protein belongs to the MetA family.

The protein resides in the cytoplasm. The enzyme catalyses L-homoserine + succinyl-CoA = O-succinyl-L-homoserine + CoA. It functions in the pathway amino-acid biosynthesis; L-methionine biosynthesis via de novo pathway; O-succinyl-L-homoserine from L-homoserine: step 1/1. Functionally, transfers a succinyl group from succinyl-CoA to L-homoserine, forming succinyl-L-homoserine. This is Homoserine O-succinyltransferase from Yersinia pseudotuberculosis serotype O:1b (strain IP 31758).